The following is a 1122-amino-acid chain: MAEQEGSGLQMLLHTLQNSSDKASTLSILQVLGDLLSVGTDRRIYYMISKGGSEALLQTLVDTARSSSPDWDILLPLFRLLAKVGLRDKKFGQKALELEALDVTLILARKNLSHSQNLLHCLWVLRVFASSVTTGAMLGINGAMELLFKVLSPYTRKHTRTIRAATEVLAALLKSSKHLRRAVNRGYVNSLLRLHQDWHSRDVTNTYVTIRHGLLLCLRHIVALRSGREAFLAAQGMETLFSSAQTCLENKNMELVISAVIQILRQCYPASRLPLVTASSAYTFPAPGSTSSELPLNLTEEDFDDDGDEEMDKDSDVEAVKEDDDLETDLSKLSSKPGLDLPEEELAQYDAMCPELSCSFEELEPKCGDDLNNKDTLHANHHHIPSVASLRQHCFNREHSSWRQEREDTVHSSILHMVKTGKSGVPSSSKQRSATNVNQSLQQNGLEIDSSGHDTSDIQAPLEQAAWDMEAISCPRITASFPNSTKPEESIGAAEKLLHTHAKHIPFHDPHLYIANAMRTRSAVGFKTMAFPDLWGHCPPPAAQPMLDRKLGVQRIKILEDIRRLLHPSDVINKVVFSLDEPRPLQGSISNCLMFHSKFESGNLRKAIQVREFEYDLLVNADVNSSQHQQWFYFKVSGMRAAVPYHFNIINCEKPNSQFNYGMQPTLYSVKEALLGRPAWIRTGSDICYYKNHYRQNAATMDGALGKRYYTLTFAVTFPHNEDACYLAYHYPYTYSTLMTHLEILERSIDHREIYFRHDVLCQTLGGNPCPLVTITAFPESNSTEHLEQFRCRPYQVITARVHPGESNASWVMKGTLEFLVSSDPVAKLLRENFVFKIIPMLNPDGVINGNHRCSLRGEDLNRQWLSPQAHLQPTIYHAKGLLHYLSSTGRGPVVFCDFHGHSQKKNVFLYGCSMKETLWQAGCTVGESALLEDVSYRTLPKILDKLAPAFTMNSCSFLVEKSRASTARVVVWREMGVSRSYTMESSYCGCNQGPYQGLQFGTGELEEMGAMYCLGLLILELKSVNCSHKLLARASSLLNADVLEHYLQRCSSSSSNSSNRTSEVDDEPYCMEEIDYSADSSSDAEQNFTELDRQIQECALNKDEEEEEKEEGTGWRRRSVT.

Positions P287–G338 are disordered. The span at T299–K313 shows a compositional bias: acidic residues. Residues Y731–E1021 form the Peptidase M14 domain. Zn(2+) contacts are provided by H803, E806, and H900. The active-site Proton donor/acceptor is E985. Residues C1099–T1122 are disordered.

The protein belongs to the peptidase M14 family. Interacts with MYLK. Interacts with TCF4. Zn(2+) is required as a cofactor. In terms of tissue distribution, widely expressed at low level. Expressed in eye, muscle, pituitary, testis and to a lower extent in brain.

The protein localises to the cytoplasm. It localises to the cytosol. It carries out the reaction (L-glutamyl)(n+1)-gamma-L-glutamyl-L-glutamyl-[protein] + H2O = (L-glutamyl)(n)-gamma-L-glutamyl-L-glutamyl-[protein] + L-glutamate. It catalyses the reaction C-terminal L-alpha-aminoacyl-L-glutamyl-L-glutamyl-[tubulin] + H2O = C-terminal L-alpha-aminoacyl-L-glutamyl-[tubulin] + L-glutamate. Metallocarboxypeptidase that mediates deglutamylation of tubulin and non-tubulin target proteins. Catalyzes the removal of polyglutamate side chains present on the gamma-carboxyl group of glutamate residues within the C-terminal tail of tubulin protein. Specifically cleaves tubulin long-side-chains, while it is not able to remove the branching point glutamate. Also catalyzes the removal of polyglutamate residues from the carboxy-terminus of non-tubulin proteins such as MYLK. The polypeptide is Cytosolic carboxypeptidase 4 (Mus musculus (Mouse)).